Reading from the N-terminus, the 188-residue chain is Pallidipin (188 aa).

A signal peptide spans 1-18 (MKVIIAATLLGILMHAFA). Intrachain disulfides connect cysteine 21–cysteine 137, cysteine 55–cysteine 184, and cysteine 89–cysteine 105.

It belongs to the calycin superfamily. Triabin family. As to expression, expressed in salivary glands.

It localises to the secreted. Has been described as a specific inhibitor of collagen-induced platelet aggregation. However, as it does not affect platelet shape change or adhesion, it is plausible that it exerts its antiplatelet activity by a mechanism similar to that of triplatin, moubatin and dipetalodipin as scavenging eicosanoids involved in inflammation such as thromboxane A2 (TXA2). This chain is Pallidipin, found in Meccus pallidipennis (Triatomine bug).